Consider the following 387-residue polypeptide: Aminodeoxyfutalosine deaminase (387 aa).

The span at 1–10 (MRPAYDDPRT) shows a compositional bias: basic and acidic residues. The interval 1 to 37 (MRPAYDDPRTTDQPITRARPPPRAARGRRLGEEPLTE) is disordered. Zn(2+) is bound by residues H61 and H63. 3 residues coordinate substrate: R116, D183, and G217. Residue H244 participates in Zn(2+) binding. The active-site Proton donor is the E247. D325 is a Zn(2+) binding site.

This sequence belongs to the metallo-dependent hydrolases superfamily. Adenosine and AMP deaminases family. It depends on Zn(2+) as a cofactor.

It catalyses the reaction 6-amino-6-deoxyfutalosine + H2O + H(+) = futalosine + NH4(+). It functions in the pathway quinol/quinone metabolism; menaquinone biosynthesis. Functionally, catalyzes the deamination of aminodeoxyfutalosine (AFL) into futalosine (FL), a step in the biosynthesis of menaquinone (MK, vitamin K2). The sequence is that of Aminodeoxyfutalosine deaminase from Streptomyces coelicolor (strain ATCC BAA-471 / A3(2) / M145).